Here is a 514-residue protein sequence, read N- to C-terminus: CUGBP Elav-like family member 2 (514 aa).

3 RRM domains span residues 44–127, 136–216, and 429–507; these read IKMF…PADS, RKLF…FADT, and ANLF…LKRS.

This sequence belongs to the CELF/BRUNOL family.

It localises to the nucleus. The protein resides in the cytoplasm. RNA-binding protein implicated in the regulation of several post-transcriptional events. May be involved in pre-mRNA alternative splicing, mRNA translation repression and stability. The protein is CUGBP Elav-like family member 2 (celf2) of Danio rerio (Zebrafish).